The chain runs to 179 residues: Natural killer cells antigen CD94 (179 aa).

Residues 1–10 (MAVFKTTLWR) lie on the Cytoplasmic side of the membrane. A helical; Signal-anchor for type II membrane protein transmembrane segment spans residues 11–31 (LISGTLGIICLSLMATLGILL). Topologically, residues 32–179 (KNSFTKLSIE…NRYICKQQLI (148 aa)) are extracellular. 2 disulfide bridges follow: cysteine 58–cysteine 70 and cysteine 61–cysteine 72. In terms of domain architecture, C-type lectin spans 68 to 175 (YRCNCYFISS…CEDKNRYICK (108 aa)). Residues asparagine 83 and asparagine 132 are each glycosylated (N-linked (GlcNAc...) asparagine). Disulfide bonds link cysteine 89–cysteine 174 and cysteine 152–cysteine 166.

In terms of assembly, can form disulfide-bonded heterodimer with NKG2 family members KLRC1 and KLRC2. KLRD1-KLRC1 heterodimer interacts with peptide-bound MHC-E-B2M heterotrimeric complex. KLRD1 plays a prominent role in directly interacting with MHC-E. KLRD1-KLRC1 interacts with much higher affinity with peptide-bound MHC-E-B2M than KLRD1-KLRC2. Interacts with the adapter protein TYROBP/DAP12; this interaction is required for cell surface expression and cell activation. As to expression, natural killer cells.

The protein resides in the cell membrane. Its function is as follows. Immune receptor involved in self-nonself discrimination. In complex with KLRC1 or KLRC2 on cytotoxic and regulatory lymphocyte subsets, recognizes non-classical major histocompatibility (MHC) class Ib molecule MHC-E loaded with self-peptides derived from the signal sequence of classical MHC class Ia and non-classical MHC class Ib molecules. Enables cytotoxic cells to monitor the expression of MHC class I molecules in healthy cells and to tolerate self. Primarily functions as a ligand binding subunit as it lacks the capacity to signal. In terms of biological role, KLRD1-KLRC1 acts as an immune inhibitory receptor. Key inhibitory receptor on natural killer (NK) cells that regulates their activation and effector functions. Dominantly counteracts T cell receptor signaling on a subset of memory/effector CD8-positive T cells as part of an antigen-driven response to avoid autoimmunity. On intraepithelial CD8-positive gamma-delta regulatory T cells triggers TGFB1 secretion, which in turn limits the cytotoxic programming of intraepithelial CD8-positive alpha-beta T cells, distinguishing harmless from pathogenic antigens. In MHC-E-rich tumor microenvironment, acts as an immune inhibitory checkpoint and may contribute to progressive loss of effector functions of NK cells and tumor-specific T cells, a state known as cell exhaustion. Upon MHC-E-peptide binding, transmits intracellular signals through KLRC1 immunoreceptor tyrosine-based inhibition motifs (ITIMs) by recruiting INPP5D/SHIP-1 and INPPL1/SHIP-2 tyrosine phosphatases to ITIMs, and ultimately opposing signals transmitted by activating receptors through dephosphorylation of proximal signaling molecules. KLRD1-KLRC2 acts as an immune activating receptor. On cytotoxic lymphocyte subsets recognizes MHC-E loaded with signal sequence-derived peptides from non-classical MHC class Ib MHC-G molecules, likely playing a role in the generation and effector functions of adaptive NK cells and in maternal-fetal tolerance during pregnancy. Regulates the effector functions of terminally differentiated cytotoxic lymphocyte subsets, and in particular may play a role in adaptive NK cell response to viral infection. Upon MHC-E-peptide binding, transmits intracellular signals via the adapter protein TYROBP/DAP12, triggering the phosphorylation of proximal signaling molecules and cell activation. The chain is Natural killer cells antigen CD94 (KLRD1) from Pan troglodytes (Chimpanzee).